A 529-amino-acid polypeptide reads, in one-letter code: Low affinity inorganic phosphate transporter 4 (529 aa).

Topologically, residues 1-21 (MASDNLVVLNALDTARTQWYH) are cytoplasmic. The helical transmembrane segment at 22-42 (VTAVIIAGMGFFTDAYDLFCI) threads the bilayer. Topologically, residues 43-71 (STVSKLLGRLYYYDPSTKAPGKLPHMANN) are extracellular. Residues 72-92 (WVIGVALVGTLSGQLVFGWLG) traverse the membrane as a helical segment. Over 93–99 (DKLGRKK) the chain is Cytoplasmic. The helical transmembrane segment at 100 to 120 (VYGLTLILMVICALCSGLSLG) threads the bilayer. Residues 121 to 125 (YSPKS) lie on the Extracellular side of the membrane. A helical transmembrane segment spans residues 126-146 (VIGTLCFFRFWLGFGIGGDYP). Topologically, residues 147-161 (LSATIMSEYANKSTR) are cytoplasmic. Residues 162–182 (GAFIAAVFAMQGVGIIFAGLV) traverse the membrane as a helical segment. The Extracellular portion of the chain corresponds to 183–211 (SMTISKVFLMNFEGKPFNVDEVLSTEPEA). Residues 212–232 (DYVWRIVLMLGALPALLTYYW) traverse the membrane as a helical segment. At 233–291 (RMKMPETGRYTAIIEGNAKQAAIDMGKVLDIEIQAEGDKLAQFKAANEYSLLSNEFFQR) the chain is on the cytoplasmic side. A helical membrane pass occupies residues 292-312 (HGLHLIGTMSTWFLLDIAFYS). The Extracellular portion of the chain corresponds to 313–344 (QNLTQKDIFPVMGLTSKANTISALREMFETSR). Residue N314 is glycosylated (N-linked (GlcNAc...) asparagine). Residues 345–365 (AMFVIALFGTFPGYWFTVFFI) form a helical membrane-spanning segment. Residues 366 to 374 (EKIGRFKIQ) lie on the Cytoplasmic side of the membrane. A helical transmembrane segment spans residues 375 to 395 (LVGFFMMSVFMAIIGVKYDYL). The Extracellular segment spans residues 396 to 405 (RNKEHKWTFA). Residues 406 to 426 (ALYGLTFFFANFGPNSTTFVL) form a helical membrane-spanning segment. Residues 427-437 (PAELFPTRVRS) are Cytoplasmic-facing. A helical membrane pass occupies residues 438-458 (TCHALSAALGKAGAMISAFGI). The Extracellular segment spans residues 459–471 (QQYTQDQDVRKIK). The chain crosses the membrane as a helical span at residues 472–492 (TAMLLLAFTNMVGFCCTFLVT). Over 493-529 (ETKGRSLEEISGEDGRQNETQMKTTRPVSGHPDDGWE) the chain is Cytoplasmic. The disordered stretch occupies residues 501–529 (EISGEDGRQNETQMKTTRPVSGHPDDGWE). Polar residues predominate over residues 510-519 (NETQMKTTRP).

This sequence belongs to the major facilitator superfamily. Phosphate:H(+) symporter (TC 2.A.1.9) family.

The protein localises to the cell membrane. It catalyses the reaction phosphate(in) + H(+)(in) = phosphate(out) + H(+)(out). Low-affinity transporter for external inorganic phosphate (Pi) probably involved in the acquisition of phosphate released by arbuscular mycorrhizal (AM) fungi (e.g. Rhizophagus irregularis and Glomus intraradices) during AM symbiosis. Acts as a Pi-sensing machinery at the root tip level, independently of AM fungi, involved in the regulation of early root branching and lateral roots formation. This is Low affinity inorganic phosphate transporter 4 from Petunia hybrida (Petunia).